Here is a 162-residue protein sequence, read N- to C-terminus: Sec-independent protein translocase protein TatB (162 aa).

Residues 1–21 (MFDLGWTELLVIGVVALIVVG) traverse the membrane as a helical segment. Disordered regions lie at residues 69 to 111 (ATNP…DRAE) and 124 to 162 (AADRMAREAAEAAAKAEEAEAALSATPASTASSDSETKA). Composition is skewed to basic and acidic residues over residues 83-111 (ATRDLTDSIDPTKFDPESETGKLAADRAE) and 124-141 (AADRMAREAAEAAAKAEE). The segment covering 144 to 155 (AALSATPASTAS) has biased composition (low complexity).

Belongs to the TatB family. The Tat system comprises two distinct complexes: a TatABC complex, containing multiple copies of TatA, TatB and TatC subunits, and a separate TatA complex, containing only TatA subunits. Substrates initially bind to the TatABC complex, which probably triggers association of the separate TatA complex to form the active translocon.

Its subcellular location is the cell inner membrane. Functionally, part of the twin-arginine translocation (Tat) system that transports large folded proteins containing a characteristic twin-arginine motif in their signal peptide across membranes. Together with TatC, TatB is part of a receptor directly interacting with Tat signal peptides. TatB may form an oligomeric binding site that transiently accommodates folded Tat precursor proteins before their translocation. The sequence is that of Sec-independent protein translocase protein TatB from Ruegeria sp. (strain TM1040) (Silicibacter sp.).